Consider the following 204-residue polypeptide: EVTKPETINYRTLKPEMDGLFCEKIFGPSKDWECHCGKYKRVRHRGIVCERCGVEVTESRVRRHRMGYIKLAAPVSHVWYLKGIPSYVAILLDIPLRDVEQIVYFNCYVVLDVGDHKDLKYKQLLTEDEWLEIEDEVYAEDSTIENEPVVGIGAEALKQLLEDLDLNQIAEELREEITNSKGQKRAKLIKRIRVIDNFLATNAK.

Cys-34, Cys-36, Cys-49, and Cys-52 together coordinate Zn(2+).

Belongs to the RNA polymerase beta' chain family. RpoC1 subfamily. In cyanobacteria the RNAP catalytic core is composed of 2 alpha, 1 beta, 1 beta', 1 gamma and 1 omega subunit. When a sigma factor is associated with the core the holoenzyme is formed, which can initiate transcription. The cofactor is Zn(2+).

It carries out the reaction RNA(n) + a ribonucleoside 5'-triphosphate = RNA(n+1) + diphosphate. Its function is as follows. DNA-dependent RNA polymerase catalyzes the transcription of DNA into RNA using the four ribonucleoside triphosphates as substrates. This chain is DNA-directed RNA polymerase subunit gamma (rpoC1), found in Prochlorococcus marinus (strain DV1).